Consider the following 264-residue polypeptide: Small ribosomal subunit protein uS2 (264 aa).

A disordered region spans residues 222–246 (GRSENKDEQNEQGEQIAPVTNEEKQ).

The protein belongs to the universal ribosomal protein uS2 family.

The chain is Small ribosomal subunit protein uS2 from Helicobacter hepaticus (strain ATCC 51449 / 3B1).